Reading from the N-terminus, the 61-residue chain is uncharacterized protein (61 aa).

An N-terminal signal peptide occupies residues 1–30; the sequence is MDVEVANMAAKLRVRGLKLPNAIVVSTAIL.

This is an uncharacterized protein from Archaeoglobus fulgidus (strain ATCC 49558 / DSM 4304 / JCM 9628 / NBRC 100126 / VC-16).